The chain runs to 132 residues: Putative esterase Ta0293 (132 aa).

It belongs to the thioesterase PaaI family.

The chain is Putative esterase Ta0293 from Thermoplasma acidophilum (strain ATCC 25905 / DSM 1728 / JCM 9062 / NBRC 15155 / AMRC-C165).